A 755-amino-acid chain; its full sequence is uncharacterized protein (755 aa).

7 disordered regions span residues 1–44, 72–91, 99–174, 393–467, 523–545, 584–672, and 734–755; these read MAAP…AAAQ, AEHS…ATAQ, FSLS…IPHY, TTNV…SSSR, LPKT…EGGG, VSSS…LPSG, and QAAT…PRRK. Composition is skewed to low complexity over residues 10-25 and 35-44; these read TTTQ…TTTT and TTTGSGAAAQ. 3 stretches are compositionally biased toward low complexity: residues 112–130, 139–151, and 393–412; these read ISSS…NASS, SPDL…LSGS, and TTNV…TKST. The segment covering 429–446 has biased composition (acidic residues); it reads IEEDTIQFDDPGQGEDDN. Positions 452 to 462 are enriched in pro residues; it reads NTPPPPGPPPN. The span at 536-545 shows a compositional bias: gly residues; it reads ATGGVTEGGG. A compositionally biased stretch (polar residues) spans 590-599; the sequence is LPQPQVATTI. Low complexity-rich tracts occupy residues 600 to 666 and 740 to 755; these read TPQA…QTPQ and SQPS…PRRK.

Belongs to the chlamydial CPn_0572/CT_456/TC_0741 family.

This is an uncharacterized protein from Chlamydia pneumoniae (Chlamydophila pneumoniae).